A 137-amino-acid chain; its full sequence is Putative pre-16S rRNA nuclease (137 aa).

The protein belongs to the YqgF nuclease family.

The protein localises to the cytoplasm. Its function is as follows. Could be a nuclease involved in processing of the 5'-end of pre-16S rRNA. The protein is Putative pre-16S rRNA nuclease of Bacillus cereus (strain B4264).